A 121-amino-acid chain; its full sequence is Griffithsin (121 aa).

The region spanning 1–120 (SLTHRKFGGS…LDSLDIYYEQ (120 aa)) is the Jacalin-type lectin domain.

In terms of biological role, mixed specificity lectin with anti-HIV activity. Binds to HIV envelope glycoproteins, including exterior membrane glycoprotein gp120, and inhibits viral entry into cells. Binding to gp120 is dependent on gp120 being glycosylated, and is inhibited by mannose, glucose and N-acetylglucosamine. This is Griffithsin from Griffithsia sp. (strain Q66D336) (Red alga).